The primary structure comprises 245 residues: Ribosomal RNA small subunit methyltransferase G (245 aa).

Residues glycine 85, phenylalanine 90, 108–110 (DST), 136–137 (AE), and arginine 155 contribute to the S-adenosyl-L-methionine site.

This sequence belongs to the methyltransferase superfamily. RNA methyltransferase RsmG family.

The protein localises to the cytoplasm. Its function is as follows. Specifically methylates the N7 position of a guanine in 16S rRNA. The protein is Ribosomal RNA small subunit methyltransferase G of Trichormus variabilis (strain ATCC 29413 / PCC 7937) (Anabaena variabilis).